Consider the following 334-residue polypeptide: Holliday junction branch migration complex subunit RuvB (334 aa).

Residues 4-186 (ADRLIAPENP…FGITQRLEYY (183 aa)) form a large ATPase domain (RuvB-L) region. ATP is bound by residues isoleucine 25, arginine 26, glycine 67, lysine 70, threonine 71, threonine 72, 133–135 (EDY), arginine 176, tyrosine 186, and arginine 223. Position 71 (threonine 71) interacts with Mg(2+). Positions 187 to 257 (KVQDLQNIVQ…VADKALNMLD (71 aa)) are small ATPAse domain (RuvB-S). The tract at residues 260-334 (AQGFDYMDRK…RAYLHFGIEK (75 aa)) is head domain (RuvB-H). The DNA site is built by arginine 315 and arginine 320.

The protein belongs to the RuvB family. Homohexamer. Forms an RuvA(8)-RuvB(12)-Holliday junction (HJ) complex. HJ DNA is sandwiched between 2 RuvA tetramers; dsDNA enters through RuvA and exits via RuvB. An RuvB hexamer assembles on each DNA strand where it exits the tetramer. Each RuvB hexamer is contacted by two RuvA subunits (via domain III) on 2 adjacent RuvB subunits; this complex drives branch migration. In the full resolvosome a probable DNA-RuvA(4)-RuvB(12)-RuvC(2) complex forms which resolves the HJ.

It is found in the cytoplasm. It catalyses the reaction ATP + H2O = ADP + phosphate + H(+). Functionally, the RuvA-RuvB-RuvC complex processes Holliday junction (HJ) DNA during genetic recombination and DNA repair, while the RuvA-RuvB complex plays an important role in the rescue of blocked DNA replication forks via replication fork reversal (RFR). RuvA specifically binds to HJ cruciform DNA, conferring on it an open structure. The RuvB hexamer acts as an ATP-dependent pump, pulling dsDNA into and through the RuvAB complex. RuvB forms 2 homohexamers on either side of HJ DNA bound by 1 or 2 RuvA tetramers; 4 subunits per hexamer contact DNA at a time. Coordinated motions by a converter formed by DNA-disengaged RuvB subunits stimulates ATP hydrolysis and nucleotide exchange. Immobilization of the converter enables RuvB to convert the ATP-contained energy into a lever motion, pulling 2 nucleotides of DNA out of the RuvA tetramer per ATP hydrolyzed, thus driving DNA branch migration. The RuvB motors rotate together with the DNA substrate, which together with the progressing nucleotide cycle form the mechanistic basis for DNA recombination by continuous HJ branch migration. Branch migration allows RuvC to scan DNA until it finds its consensus sequence, where it cleaves and resolves cruciform DNA. This Vibrio parahaemolyticus serotype O3:K6 (strain RIMD 2210633) protein is Holliday junction branch migration complex subunit RuvB.